A 231-amino-acid chain; its full sequence is DNA repair protein RecO (231 aa).

The protein belongs to the RecO family.

Functionally, involved in DNA repair and RecF pathway recombination. This is DNA repair protein RecO from Coxiella burnetii (strain CbuK_Q154) (Coxiella burnetii (strain Q154)).